A 266-amino-acid chain; its full sequence is Glutamate racemase (266 aa).

Residues 9 to 10 and 41 to 42 contribute to the substrate site; these read DS and YG. The active-site Proton donor/acceptor is cysteine 72. Residue 73 to 74 participates in substrate binding; the sequence is NT. Cysteine 184 acts as the Proton donor/acceptor in catalysis. Residue 185–186 participates in substrate binding; sequence TH.

This sequence belongs to the aspartate/glutamate racemases family.

It carries out the reaction L-glutamate = D-glutamate. It participates in cell wall biogenesis; peptidoglycan biosynthesis. Functionally, provides the (R)-glutamate required for cell wall biosynthesis. In Staphylococcus haemolyticus (strain JCSC1435), this protein is Glutamate racemase.